Consider the following 562-residue polypeptide: Probable malate:quinone oxidoreductase (562 aa).

The tract at residues 530 to 562 is disordered; that stretch reads EVPDKSATPPDPTIAPKHQHSPTHNANSEMQAL. Polar residues predominate over residues 551-562; the sequence is PTHNANSEMQAL.

The protein belongs to the MQO family. FAD serves as cofactor.

It carries out the reaction (S)-malate + a quinone = a quinol + oxaloacetate. It participates in carbohydrate metabolism; tricarboxylic acid cycle; oxaloacetate from (S)-malate (quinone route): step 1/1. The protein is Probable malate:quinone oxidoreductase of Xylella fastidiosa (strain 9a5c).